Reading from the N-terminus, the 81-residue chain is Beta-catenin-interacting protein 1 (81 aa).

Ser-59 carries the phosphoserine modification.

Belongs to the CTNNBIP1 family. Binds CTNNB1.

Its subcellular location is the cytoplasm. It localises to the nucleus. In terms of biological role, prevents the interaction between CTNNB1 and TCF family members, and acts as a negative regulator of the Wnt signaling pathway. The polypeptide is Beta-catenin-interacting protein 1 (CTNNBIP1) (Bos taurus (Bovine)).